Consider the following 539-residue polypeptide: GMP synthase [glutamine-hydrolyzing] (539 aa).

A Glutamine amidotransferase type-1 domain is found at 4 to 202; sequence KILILDFGSQ…VLQIAGAKPD (199 aa). The Nucleophile role is filled by Cys81. Active-site residues include His176 and Glu178. One can recognise a GMPS ATP-PPase domain in the interval 203–395; it reads WIMSNHIEEA…LGLPPEMVYR (193 aa). 230 to 236 is an ATP binding site; it reads SGGVDSS.

Homodimer.

It catalyses the reaction XMP + L-glutamine + ATP + H2O = GMP + L-glutamate + AMP + diphosphate + 2 H(+). It participates in purine metabolism; GMP biosynthesis; GMP from XMP (L-Gln route): step 1/1. Catalyzes the synthesis of GMP from XMP. The chain is GMP synthase [glutamine-hydrolyzing] from Burkholderia ambifaria (strain MC40-6).